The primary structure comprises 655 residues: Endoplasmic reticulum chaperone BiP (655 aa).

Residues 1-19 (MMKFTVVAAALLLLGAVRA) form the signal peptide. A required for interaction with ELAPOR1 region spans residues 1-81 (MMKFTVVAAA…EGERLIGDAA (81 aa)). Residue 37 to 40 (GTTY) coordinates ATP. The residue at position 87 (Ser87) is a Phosphoserine. Lys97 is an ATP binding site. N6-acetyllysine is present on Lys126. The segment at 126-281 (KPYIQVDIGG…KKKTGKDVRK (156 aa)) is nucleotide-binding (NBD). Tyr161 is subject to 3'-nitrotyrosine. Position 214 is an N6-acetyllysine (Lys214). ATP is bound at residue 228–230 (GGT). Lys272 bears the N6-acetyllysine mark. 294–301 (EKAKRALS) contributes to the ATP binding site. Residue Lys327 is modified to N6-acetyllysine. A Glycyl lysine isopeptide (Lys-Gly) (interchain with G-Cter in SUMO2) cross-link involves residue Lys353. The residue at position 354 (Lys354) is an N6-acetyllysine; alternate. Lys354 participates in a covalent cross-link: Glycyl lysine isopeptide (Lys-Gly) (interchain with G-Cter in SUMO1); alternate. 365–368 (GSTR) provides a ligand contact to ATP. Residues 410–420 (QDTGDLVLLDV) are interdomain linker. Positions 421–501 (CPLTLGIETV…PRGVPQIEVT (81 aa)) are substrate-binding (SBD). Position 448 is an N6-succinyllysine (Lys448). The residue at position 493 (Arg493) is an Omega-N-methylarginine. O-AMP-threonine; alternate is present on Thr519. Thr519 carries the post-translational modification Phosphothreonine; alternate. Lys586 bears the N6,N6,N6-trimethyllysine; by METTL21A; in vitro mark. Lys586 is modified (N6,N6-dimethyllysine; alternate). Position 586 is an N6-methyllysine; alternate (Lys586). Lys592 carries the N6-methyllysine modification. A disordered region spans residues 632–655 (ISKLYGSGGPPPTGEEDTSEKDEL). Residues Thr644 and Thr649 each carry the phosphothreonine modification. A compositionally biased stretch (acidic residues) spans 645–655 (GEEDTSEKDEL). Ser650 is subject to Phosphoserine. The Prevents secretion from ER signature appears at 652–655 (KDEL).

The protein belongs to the heat shock protein 70 family. Monomer and homooligomer; homooligomerization via the interdomain linker inactivates the chaperone activity and acts as a storage of HSPA5/BiP molecules. Interacts with DNAJC1 (via J domain). Component of an EIF2 complex at least composed of CELF1/CUGBP1, CALR, CALR3, EIF2S1, EIF2S2, HSP90B1 and HSPA5. Part of a large chaperone multiprotein complex comprising DNAJB11, HSP90B1, HSPA5, HYOU, PDIA2, PDIA4, PDIA6, PPIB, SDF2L1, UGGT1 and very small amounts of ERP29, but not, or at very low levels, CALR nor CANX. Interacts with TMEM132A and TRIM21. May form a complex with ERLEC1, OS9, SEL1L and SYVN1. Interacts with DNAJC10. Interacts with DNAJB9/ERdj4; leading to recruit HSPA5/BiP to ERN1/IRE1. Interacts with ERN1/IRE1 (via luminal domain); the interaction takes place following interaction with DNAJB9/ERdj4 and leads to inactivate ERN1/IRE1, the interaction also competitively inhibits ERN1 interaction with MANF. Interacts directly with MANF (via SAP domain); the interaction inhibits ATP binding to HSPA5/BiP and subsequent nucleotide exchange. Interacts with ERN1 (via luminal domain); the interaction competitively inhibits ERN1 interaction with MANF. Interacts with EIF2AK3/PERK (via luminal domain); interaction leads to inactivate EIF2AK3/PERK. Interacts with MX1. Interacts with METTL23. Interacts with CEMIP; the interaction induces calcium leakage from the endoplasmic reticulum and cell migration. Interacts with PCSK4 form; the interaction takes place in the endoplasmic reticulum. Interacts with CIPC. Interacts with CCDC88B (via C-terminus); the interaction opposes ERN1-mediated JNK activation, protecting against apoptosis. Interacts with INPP5K; necessary for INPP5K localization at the endoplasmic reticulum. Interacts with MANF; the interaction is direct. Interacts with LOXL2; leading to activate the ERN1/IRE1-XBP1 pathway of the unfolded protein response. Interacts with CLU under stressed condition; interaction increases CLU protein stability; facilitates its retrotranslocation and redistribution to the mitochondria; cooperatively suppress stress-induced apoptosis by stabilizing mitochondrial membrane integrity. Interacts with CCDC47. Interacts with CLN3. Interacts with ELAPOR1; may regulate the function of HSPA5 in apoptosis and cell proliferation. Interacts with CASP7. Interacts with ILDR2; the interaction stabilizes ILDR2 expression. Interacts with ADAM7. In unstressed cells, AMPylation at Thr-519 by FICD inactivates the chaperome activity: AMPylated form is locked in a relatively inert state and only weakly stimulated by J domain-containing proteins. In response to endoplasmic reticulum stress, de-AMPylation by the same protein, FICD, restores the chaperone activity. As to expression, expressed in sperm (at protein level).

It is found in the endoplasmic reticulum lumen. The protein localises to the melanosome. It localises to the cytoplasm. The protein resides in the cell surface. It carries out the reaction ATP + H2O = ADP + phosphate + H(+). The chaperone activity is regulated by ATP-induced allosteric coupling of the nucleotide-binding (NBD) and substrate-binding (SBD) domains. In the ADP-bound and nucleotide-free (apo) states, the two domains have little interaction. In contrast, in the ATP-bound state the two domains are tightly coupled, which results in drastically accelerated kinetics in both binding and release of polypeptide substrates. J domain-containing co-chaperones (DNAJB9/ERdj4 or DNAJC10/ERdj5) stimulate the ATPase activity and are required for efficient substrate recognition by HSPA5/BiP. Homooligomerization inactivates participating HSPA5/BiP protomers and probably act as reservoirs to store HSPA5/BiP molecules when they are not needed by the cell. Its function is as follows. Endoplasmic reticulum chaperone that plays a key role in protein folding and quality control in the endoplasmic reticulum lumen. Involved in the correct folding of proteins and degradation of misfolded proteins via its interaction with DNAJC10/ERdj5, probably to facilitate the release of DNAJC10/ERdj5 from its substrate. Acts as a key repressor of the EIF2AK3/PERK and ERN1/IRE1-mediated unfolded protein response (UPR). In the unstressed endoplasmic reticulum, recruited by DNAJB9/ERdj4 to the luminal region of ERN1/IRE1, leading to disrupt the dimerization of ERN1/IRE1, thereby inactivating ERN1/IRE1. Also binds and inactivates EIF2AK3/PERK in unstressed cells. Accumulation of misfolded protein in the endoplasmic reticulum causes release of HSPA5/BiP from ERN1/IRE1 and EIF2AK3/PERK, allowing their homodimerization and subsequent activation. Plays an auxiliary role in post-translational transport of small presecretory proteins across endoplasmic reticulum (ER). May function as an allosteric modulator for SEC61 channel-forming translocon complex, likely cooperating with SEC62 to enable the productive insertion of these precursors into SEC61 channel. Appears to specifically regulate translocation of precursors having inhibitory residues in their mature region that weaken channel gating. May also play a role in apoptosis and cell proliferation. The polypeptide is Endoplasmic reticulum chaperone BiP (Mus musculus (Mouse)).